We begin with the raw amino-acid sequence, 447 residues long: Beta-glucuronosyltransferase GlcAT14A (447 aa).

The Cytoplasmic segment spans residues 1 to 33 (MKKLRSYYSNVRHHQNHHHHHHHHSNIVSSERK). The chain crosses the membrane as a helical; Signal-anchor for type II membrane protein span at residues 34 to 54 (WIFFPLLIGSIFALFLLFLTT). Over 55–447 (TLTSPTGGVR…TENFRSKQCK (393 aa)) the chain is Lumenal. 4 N-linked (GlcNAc...) asparagine glycosylation sites follow: Asn151, Asn200, Asn329, and Asn405.

This sequence belongs to the glycosyltransferase 14 family.

Its subcellular location is the golgi apparatus membrane. Its function is as follows. Beta-glucuronosyltransferase involved in the biosynthesis of type II arabinogalactan (AG). Modifies both the beta-1,6-linked galactan and beta-1,3-linked galactan present in type II AG. Transfers glucuronate to beta-1,6-galactooligosaccharides with degrees of polymerization ranging from 3 to 11. Transfers glucuronate to beta-1,3-galactooligosaccharides with degrees of polymerization ranging from 5 to 7. The addition of glucuronate at the O6 position may terminate galactose chain extension. Required for cell elongation during seedling growth. The protein is Beta-glucuronosyltransferase GlcAT14A of Arabidopsis thaliana (Mouse-ear cress).